The following is a 193-amino-acid chain: MAANLIEDNCINLVKMKFVNNTLYFKAESDEGLESDYFGKLEPKLSIIRNLNDQVLFVNEGNQPVFEDMPDSDCTDNAPHTIFIIYMYKDSLTRGLAVTISVKYKTMSTLSCKNKTISFQKMSPPDSINDEGNDIIFFQRSVPGHDDKIQFESSLYKGHFLACKKENDLFKLILKDKDENGDKSIMFTVQNKS.

Residues 1-36 (MAANLIEDNCINLVKMKFVNNTLYFKAESDEGLESD) constitute a propeptide that is removed on maturation.

This sequence belongs to the IL-1 family. As to quaternary structure, forms a ternary complex with ligand-binding receptor subunit IL18R1 and signaling receptor subunit IL18RAP at the plasma membrane. Mature IL18 first binds to IL18R1 forming a low affinity binary complex, which then interacts with IL18RAP to form a high affinity ternary complex that signals inside the cell. Interacts with cargo receptor TMED10; the interaction mediates the translocation from the cytoplasm into the ERGIC (endoplasmic reticulum-Golgi intermediate compartment) and thereby secretion. The pro-IL-18 precursor is processed by CASP1, CASP4 or CASP5 to yield its mature, active form. The pro-IL-18 precursor features autoinhibitory interactions between the propeptide and the post-cleavage-site region, preventing recognition by the IL18R1 receptor. Processing by CASP1, CASP4 or CASP5 induces conformational changes to generate critical receptor-binding sites. The mature form is then secreted and released in the extracellular milieu by passing through the gasdermin-D (GSDMD) pore. In contrast, cleavage by CASP3 inactivates IL18.

The protein localises to the cytoplasm. It localises to the cytosol. Its subcellular location is the secreted. Functionally, pro-inflammatory cytokine primarily involved in epithelial barrier repair, polarized T-helper 1 (Th1) cell and natural killer (NK) cell immune responses. Upon binding to IL18R1 and IL18RAP, forms a signaling ternary complex which activates NF-kappa-B, triggering synthesis of inflammatory mediators. Synergizes with IL12/interleukin-12 to induce IFNG synthesis from T-helper 1 (Th1) cells and natural killer (NK) cells. Involved in transduction of inflammation downstream of pyroptosis: its mature form is specifically released in the extracellular milieu by passing through the gasdermin-D (GSDMD) pore. The sequence is that of Interleukin-18 (IL18) from Canis lupus familiaris (Dog).